The sequence spans 47 residues: Thionin (47 aa).

Intrachain disulfides connect Cys-3–Cys-41, Cys-4–Cys-33, Cys-12–Cys-31, and Cys-16–Cys-27.

It belongs to the plant thionin (TC 1.C.44) family. 4 C-C subfamily.

The protein localises to the secreted. Its function is as follows. Thionins are small plant proteins which are toxic to animal cells. They seem to exert their toxic effect at the level of the cell membrane. Their precise function is not known. This is Thionin (THI1) from Pyrularia pubera (Buffalo nut).